The primary structure comprises 150 residues: UPF0756 membrane protein HDEF_0364 (150 aa).

A run of 5 helical transmembrane segments spans residues 1-21 (MMFF…GLIS), 28-48 (ISVV…FPWV), 51-71 (YALK…IASG), 88-108 (ILGI…VSLM), and 123-143 (ILGV…AGLL).

It belongs to the UPF0756 family.

Its subcellular location is the cell membrane. This is UPF0756 membrane protein HDEF_0364 from Hamiltonella defensa subsp. Acyrthosiphon pisum (strain 5AT).